The chain runs to 337 residues: tRNA N6-adenosine threonylcarbamoyltransferase (337 aa).

The Fe cation site is built by His111 and His115. Substrate contacts are provided by residues 134–138 (LVSGG), Asp167, Gly180, and Asn272. Residue Asp300 coordinates Fe cation.

This sequence belongs to the KAE1 / TsaD family. Requires Fe(2+) as cofactor.

Its subcellular location is the cytoplasm. It catalyses the reaction L-threonylcarbamoyladenylate + adenosine(37) in tRNA = N(6)-L-threonylcarbamoyladenosine(37) in tRNA + AMP + H(+). Functionally, required for the formation of a threonylcarbamoyl group on adenosine at position 37 (t(6)A37) in tRNAs that read codons beginning with adenine. Is involved in the transfer of the threonylcarbamoyl moiety of threonylcarbamoyl-AMP (TC-AMP) to the N6 group of A37, together with TsaE and TsaB. TsaD likely plays a direct catalytic role in this reaction. The chain is tRNA N6-adenosine threonylcarbamoyltransferase from Pseudoalteromonas translucida (strain TAC 125).